The chain runs to 646 residues: Phosphomethylpyrimidine synthase (646 aa).

A compositionally biased stretch (polar residues) spans 1–13 (MNIRSNPDTTRPA). Residues 1–30 (MNIRSNPDTTRPAVTTGALPSSRKMFSAPD) are disordered. Substrate contacts are provided by residues Asn221, Met250, Tyr279, His315, 335–337 (SRG), 376–379 (DGLR), and Glu415. His419 contacts Zn(2+). Tyr442 contributes to the substrate binding site. His483 provides a ligand contact to Zn(2+). Positions 563, 566, and 571 each coordinate [4Fe-4S] cluster.

This sequence belongs to the ThiC family. Homodimer. [4Fe-4S] cluster serves as cofactor.

It catalyses the reaction 5-amino-1-(5-phospho-beta-D-ribosyl)imidazole + S-adenosyl-L-methionine = 4-amino-2-methyl-5-(phosphooxymethyl)pyrimidine + CO + 5'-deoxyadenosine + formate + L-methionine + 3 H(+). Its pathway is cofactor biosynthesis; thiamine diphosphate biosynthesis. Its function is as follows. Catalyzes the synthesis of the hydroxymethylpyrimidine phosphate (HMP-P) moiety of thiamine from aminoimidazole ribotide (AIR) in a radical S-adenosyl-L-methionine (SAM)-dependent reaction. The sequence is that of Phosphomethylpyrimidine synthase from Nitrobacter winogradskyi (strain ATCC 25391 / DSM 10237 / CIP 104748 / NCIMB 11846 / Nb-255).